A 332-amino-acid chain; its full sequence is 2,3-diketo-L-gulonate reductase (332 aa).

The active-site Proton donor is His-44. NAD(+) contacts are provided by residues 168–174 (ITMVDMS), 224–225 (WK), and 304–306 (GHE).

This sequence belongs to the LDH2/MDH2 oxidoreductase family. DlgD subfamily. As to quaternary structure, homodimer.

The protein localises to the cytoplasm. The enzyme catalyses 3-dehydro-L-gulonate + NAD(+) = 2,3-dioxo-L-gulonate + NADH + H(+). It catalyses the reaction 3-dehydro-L-gulonate + NADP(+) = 2,3-dioxo-L-gulonate + NADPH + H(+). Its function is as follows. Catalyzes the reduction of 2,3-diketo-L-gulonate in the presence of NADH, to form 3-keto-L-gulonate. This chain is 2,3-diketo-L-gulonate reductase, found in Mannheimia succiniciproducens (strain KCTC 0769BP / MBEL55E).